We begin with the raw amino-acid sequence, 40 residues long: uncharacterized protein (40 aa).

This is an uncharacterized protein from Streptomyces peucetius.